A 400-amino-acid polypeptide reads, in one-letter code: Proline-rich protein 5 (400 aa).

The segment at 301–358 is disordered; that stretch reads TDSTSKLSMAGTKPPGEGERPPISNGQFPPLHNLSDSQQGLYNSQRDSPLLPAPSSSP. Positions 334 to 347 are enriched in polar residues; it reads LSDSQQGLYNSQRD. Residues 348–358 are compositionally biased toward low complexity; the sequence is SPLLPAPSSSP.

This sequence belongs to the PROTOR family. Associated component of the mechanistic target of rapamycin complex 2 (mTORC2).

Associated subunit of mTORC2, which regulates cell growth and survival in response to hormonal signals. The sequence is that of Proline-rich protein 5 (prr5) from Xenopus laevis (African clawed frog).